Consider the following 314-residue polypeptide: Oxaloacetate tautomerase FAHD2A, mitochondrial (314 aa).

The transit peptide at 1 to 84 (MLVSGRRRLL…ATLSVARRAL (84 aa)) directs the protein to the mitochondrion. 3 residues coordinate Mg(2+): glutamate 159, glutamate 161, and aspartate 190.

The protein belongs to the FAH family. The cofactor is Mg(2+). Requires Mn(2+) as cofactor.

Its subcellular location is the mitochondrion. It carries out the reaction oxaloacetate = enol-oxaloacetate. Tautomerase that converts enol-oxaloacetate, a strong inhibitor of succinate dehydrogenase, to the physiological keto form of oxaloacetate. It is thereby required to maximize aerobic respiration efficiency by preventing succinate dehydrogenase inhibition. The protein is Oxaloacetate tautomerase FAHD2A, mitochondrial of Homo sapiens (Human).